A 367-amino-acid chain; its full sequence is Alanine racemase (367 aa).

Residue Lys40 is the Proton acceptor; specific for D-alanine of the active site. At Lys40 the chain carries N6-(pyridoxal phosphate)lysine. Arg136 serves as a coordination point for substrate. Catalysis depends on Tyr263, which acts as the Proton acceptor; specific for L-alanine. Residue Met310 participates in substrate binding.

This sequence belongs to the alanine racemase family. The cofactor is pyridoxal 5'-phosphate.

The enzyme catalyses L-alanine = D-alanine. It participates in amino-acid biosynthesis; D-alanine biosynthesis; D-alanine from L-alanine: step 1/1. Functionally, catalyzes the interconversion of L-alanine and D-alanine. May also act on other amino acids. In Lactococcus lactis subsp. cremoris (strain SK11), this protein is Alanine racemase (alr).